A 260-amino-acid polypeptide reads, in one-letter code: Indole-3-glycerol phosphate synthase (260 aa).

It belongs to the TrpC family.

The catalysed reaction is 1-(2-carboxyphenylamino)-1-deoxy-D-ribulose 5-phosphate + H(+) = (1S,2R)-1-C-(indol-3-yl)glycerol 3-phosphate + CO2 + H2O. It participates in amino-acid biosynthesis; L-tryptophan biosynthesis; L-tryptophan from chorismate: step 4/5. The polypeptide is Indole-3-glycerol phosphate synthase (Leifsonia xyli subsp. xyli (strain CTCB07)).